Consider the following 286-residue polypeptide: Protein FAM87A (286 aa).

The next 2 helical transmembrane spans lie at 68–88 (YLHS…ETAL) and 161–181 (SFFV…GDML).

This sequence belongs to the FAM87 family.

It is found in the membrane. The sequence is that of Protein FAM87A (FAM87A) from Homo sapiens (Human).